Reading from the N-terminus, the 523-residue chain is NAD(P)H-quinone oxidoreductase subunit 2 (523 aa).

The next 13 membrane-spanning stretches (helical) occupy residues 29 to 49, 57 to 77, 94 to 114, 128 to 148, 182 to 202, 223 to 243, 255 to 275, 291 to 311, 317 to 337, 345 to 365, 389 to 409, 424 to 444, and 477 to 497; these read AVAP…VDLA, WVPP…ALQW, LAIA…MISW, AGIL…TDLV, LLVG…LYGL, AALA…AVPF, PTPV…ALAL, LLFT…ALAQ, MLAY…VCGT, VLYT…IILF, LGLS…GFFG, VLVV…IGVI, and VALV…NPLF.

This sequence belongs to the complex I subunit 2 family. In terms of assembly, NDH-1 can be composed of about 15 different subunits; different subcomplexes with different compositions have been identified which probably have different functions.

The protein localises to the cellular thylakoid membrane. It carries out the reaction a plastoquinone + NADH + (n+1) H(+)(in) = a plastoquinol + NAD(+) + n H(+)(out). The enzyme catalyses a plastoquinone + NADPH + (n+1) H(+)(in) = a plastoquinol + NADP(+) + n H(+)(out). Functionally, NDH-1 shuttles electrons from an unknown electron donor, via FMN and iron-sulfur (Fe-S) centers, to quinones in the respiratory and/or the photosynthetic chain. The immediate electron acceptor for the enzyme in this species is believed to be plastoquinone. Couples the redox reaction to proton translocation, and thus conserves the redox energy in a proton gradient. Cyanobacterial NDH-1 also plays a role in inorganic carbon-concentration. The sequence is that of NAD(P)H-quinone oxidoreductase subunit 2 from Synechococcus sp. (strain WH7803).